Reading from the N-terminus, the 794-residue chain is Putative neurotrophin receptor LTRK 1 (794 aa).

The N-terminal stretch at methionine 1–proline 33 is a signal peptide. Residues leucine 34 to glutamine 419 are Extracellular-facing. Positions glutamine 36–asparagine 102 are disordered. Residues asparagine 64, asparagine 102, and asparagine 128 are each glycosylated (N-linked (GlcNAc...) asparagine). LRR repeat units follow at residues cysteine 181–threonine 202 and serine 205–threonine 226. In terms of domain architecture, LRRCT spans asparagine 237–proline 280. Asparagine 288 and asparagine 374 each carry an N-linked (GlcNAc...) asparagine glycan. Residues valine 420 to leucine 440 form a helical membrane-spanning segment. Residues cysteine 441–alanine 794 lie on the Cytoplasmic side of the membrane. A Protein kinase domain is found at isoleucine 504–isoleucine 775. ATP is bound by residues isoleucine 510–valine 518 and lysine 538. The Proton acceptor role is filled by aspartate 647. Phosphotyrosine; by autocatalysis is present on residues tyrosine 673, tyrosine 677, tyrosine 678, and tyrosine 789.

The protein belongs to the protein kinase superfamily. Tyr protein kinase family. Insulin receptor subfamily. As to expression, expression is confined to the central nervous system and its associated endocrine tissues.

The protein resides in the membrane. The enzyme catalyses L-tyrosyl-[protein] + ATP = O-phospho-L-tyrosyl-[protein] + ADP + H(+). May bind an endogenous invertebrate neurotrophin. Binds human NT-3, but not NGF or BDNF. This chain is Putative neurotrophin receptor LTRK 1, found in Lymnaea stagnalis (Great pond snail).